The primary structure comprises 299 residues: Probable endonuclease 4 (299 aa).

Residues histidine 69, histidine 110, glutamate 145, aspartate 179, histidine 182, histidine 214, aspartate 227, histidine 229, and glutamate 259 each coordinate Zn(2+).

It belongs to the AP endonuclease 2 family. It depends on Zn(2+) as a cofactor.

It catalyses the reaction Endonucleolytic cleavage to 5'-phosphooligonucleotide end-products.. Functionally, endonuclease IV plays a role in DNA repair. It cleaves phosphodiester bonds at apurinic or apyrimidinic (AP) sites, generating a 3'-hydroxyl group and a 5'-terminal sugar phosphate. The protein is Probable endonuclease 4 of Geobacillus kaustophilus (strain HTA426).